Consider the following 208-residue polypeptide: Uridine kinase (208 aa).

11 to 18 (GGSGSGKT) is an ATP binding site.

Belongs to the uridine kinase family.

It localises to the cytoplasm. The catalysed reaction is uridine + ATP = UMP + ADP + H(+). It carries out the reaction cytidine + ATP = CMP + ADP + H(+). It participates in pyrimidine metabolism; CTP biosynthesis via salvage pathway; CTP from cytidine: step 1/3. It functions in the pathway pyrimidine metabolism; UMP biosynthesis via salvage pathway; UMP from uridine: step 1/1. In Staphylococcus carnosus (strain TM300), this protein is Uridine kinase.